The chain runs to 194 residues: MSAITITQAAEDYLAELLSKQDTPGIGIRVFITQPGTPYAETCIAYCKPGEQKPEDTPVGLASFTAWIDAVSEPFLEDAVVDYATDRMGGQLTIKAPNAKVPMVNEDSPLNERINYYLQTEINPGLASHGGQVSLVDVVEEGIAVLRFGGGCQGCGQADYTLKEGIEKTLLERIPELKGVRDVTDHSNRENAYY.

[4Fe-4S] cluster-binding residues include Cys-152 and Cys-155.

Belongs to the NfuA family. Homodimer. Requires [4Fe-4S] cluster as cofactor.

In terms of biological role, involved in iron-sulfur cluster biogenesis. Binds a 4Fe-4S cluster, can transfer this cluster to apoproteins, and thereby intervenes in the maturation of Fe/S proteins. Could also act as a scaffold/chaperone for damaged Fe/S proteins. In Ectopseudomonas mendocina (strain ymp) (Pseudomonas mendocina), this protein is Fe/S biogenesis protein NfuA.